The chain runs to 345 residues: Trace amine-associated receptor 6 (345 aa).

Residues methionine 1 to arginine 32 are Extracellular-facing. N-linked (GlcNAc...) asparagine glycosylation is found at asparagine 4 and asparagine 19. Cystine bridges form between cysteine 22–cysteine 186 and cysteine 105–cysteine 190. The chain crosses the membrane as a helical span at residues valine 33 to valine 53. Topologically, residues methionine 54–asparagine 68 are cytoplasmic. Residues phenylalanine 69–serine 89 traverse the membrane as a helical segment. The Extracellular segment spans residues methionine 90–phenylalanine 107. The chain crosses the membrane as a helical span at residues histidine 108–isoleucine 128. At aspartate 129 to serine 147 the chain is on the cytoplasmic side. A helical membrane pass occupies residues valine 148 to phenylalanine 168. Residues tyrosine 169–aspartate 202 are Extracellular-facing. The helical transmembrane segment at phenylalanine 203–valine 223 threads the bilayer. Over alanine 224–threonine 259 the chain is Cytoplasmic. The chain crosses the membrane as a helical span at residues leucine 260–isoleucine 276. Residues aspartate 277–alanine 282 lie on the Extracellular side of the membrane. The helical transmembrane segment at phenylalanine 283–tyrosine 302 threads the bilayer. The Cytoplasmic segment spans residues asparagine 303–isoleucine 345.

It belongs to the G-protein coupled receptor 1 family. In terms of tissue distribution, expressed at low abundance in various brain tissues, as well as in fetal liver, but not in the cerebellum or placenta. In the brain, comparable levels of expression in basal ganglia, frontal cortex, substantia nigra, amygdala and hippocampus, highest expression in hippocampus and lowest expression in basal ganglia.

Its subcellular location is the cell membrane. Olfactory receptor specific for trace amines, such as beta-phenylethylamine (beta-PEA). Trace amine compounds are enriched in animal body fluids and act on trace amine-associated receptors (TAARs) to elicit both intraspecific and interspecific innate behaviors. Beta-PEA-binding causes a conformation change that triggers signaling via G(s)-class of G alpha proteins (GNAL or GNAS). This is Trace amine-associated receptor 6 from Homo sapiens (Human).